A 241-amino-acid chain; its full sequence is Aliphatic sulfonates import ATP-binding protein SsuB (241 aa).

The 217-residue stretch at 10–226 folds into the ABC transporter domain; that stretch reads VHLHGFSRSF…RPDHPAFMQL (217 aa). 42 to 49 lines the ATP pocket; the sequence is GESGSGKT.

This sequence belongs to the ABC transporter superfamily. Aliphatic sulfonates importer (TC 3.A.1.17.2) family. The complex is composed of two ATP-binding proteins (SsuB), two transmembrane proteins (SsuC) and a solute-binding protein (SsuA).

It localises to the cell inner membrane. It catalyses the reaction ATP + H2O + aliphatic sulfonate-[sulfonate-binding protein]Side 1 = ADP + phosphate + aliphatic sulfonateSide 2 + [sulfonate-binding protein]Side 1.. In terms of biological role, part of the ABC transporter complex SsuABC involved in aliphatic sulfonates import. Responsible for energy coupling to the transport system. The polypeptide is Aliphatic sulfonates import ATP-binding protein SsuB (Delftia acidovorans (Pseudomonas acidovorans)).